We begin with the raw amino-acid sequence, 102 residues long: MICOS complex subunit MIC12 (102 aa).

Residues 4 to 26 (VLKLTSVTLAASSLAAAGYFYAF) form a helical membrane-spanning segment.

Belongs to the MICOS complex subunit Mic12 family. Component of the mitochondrial contact site and cristae organizing system (MICOS) complex.

It localises to the mitochondrion inner membrane. In terms of biological role, component of the MICOS complex, a large protein complex of the mitochondrial inner membrane that plays crucial roles in the maintenance of crista junctions, inner membrane architecture, and formation of contact sites to the outer membrane. This Lachancea thermotolerans (strain ATCC 56472 / CBS 6340 / NRRL Y-8284) (Yeast) protein is MICOS complex subunit MIC12 (AIM5).